The chain runs to 483 residues: Regulatory protein ViaA (483 aa).

It belongs to the ViaA family. Homodimer. Interacts with RavA.

It localises to the cytoplasm. Component of the RavA-ViaA chaperone complex, which may act on the membrane to optimize the function of some of the respiratory chains. ViaA stimulates the ATPase activity of RavA. This chain is Regulatory protein ViaA, found in Escherichia fergusonii (strain ATCC 35469 / DSM 13698 / CCUG 18766 / IAM 14443 / JCM 21226 / LMG 7866 / NBRC 102419 / NCTC 12128 / CDC 0568-73).